A 206-amino-acid chain; its full sequence is Cytidylate kinase (206 aa).

9 to 17 (GPAAAGKGT) contacts ATP. The span at 155–168 (LRERDRRDREREAA) shows a compositional bias: basic and acidic residues. Residues 155–174 (LRERDRRDREREAAPLRPAP) form a disordered region.

Belongs to the cytidylate kinase family. Type 1 subfamily.

Its subcellular location is the cytoplasm. The enzyme catalyses CMP + ATP = CDP + ADP. It catalyses the reaction dCMP + ATP = dCDP + ADP. The polypeptide is Cytidylate kinase (Cereibacter sphaeroides (strain KD131 / KCTC 12085) (Rhodobacter sphaeroides)).